The chain runs to 232 residues: Flagellar L-ring protein (232 aa).

Residues 1–21 (MQKYALHAYPVMALMVATLTG) form the signal peptide. Cys22 carries the N-palmitoyl cysteine lipid modification. A lipid anchor (S-diacylglycerol cysteine) is attached at Cys22.

The protein belongs to the FlgH family. The basal body constitutes a major portion of the flagellar organelle and consists of four rings (L,P,S, and M) mounted on a central rod.

It is found in the cell outer membrane. It localises to the bacterial flagellum basal body. In terms of biological role, assembles around the rod to form the L-ring and probably protects the motor/basal body from shearing forces during rotation. The chain is Flagellar L-ring protein from Salmonella gallinarum (strain 287/91 / NCTC 13346).